Reading from the N-terminus, the 197-residue chain is Probable molybdenum cofactor guanylyltransferase (197 aa).

Residues 12 to 14, K24, D71, and D103 contribute to the GTP site; that span reads LAG. D103 contacts Mg(2+).

The protein belongs to the MobA family. The cofactor is Mg(2+).

It localises to the cytoplasm. It carries out the reaction Mo-molybdopterin + GTP + H(+) = Mo-molybdopterin guanine dinucleotide + diphosphate. Transfers a GMP moiety from GTP to Mo-molybdopterin (Mo-MPT) cofactor (Moco or molybdenum cofactor) to form Mo-molybdopterin guanine dinucleotide (Mo-MGD) cofactor. The chain is Probable molybdenum cofactor guanylyltransferase from Mycolicibacterium paratuberculosis (strain ATCC BAA-968 / K-10) (Mycobacterium paratuberculosis).